We begin with the raw amino-acid sequence, 140 residues long: Profilin-1 (140 aa).

An N-acetylalanine modification is found at A2. S28 is modified (phosphoserine). A Glycyl lysine isopeptide (Lys-Gly) (interchain with G-Cter in SUMO2); alternate cross-link involves residue K54. K54 participates in a covalent cross-link: Glycyl lysine isopeptide (Lys-Gly) (interchain with G-Cter in ubiquitin); alternate. At S57 the chain carries Phosphoserine. The residue at position 108 (K108) is an N6-acetyllysine. Position 129 is a phosphotyrosine (Y129). The residue at position 138 (S138) is a Phosphoserine; by ROCK1.

This sequence belongs to the profilin family. As to quaternary structure, found in a complex with XPO6, Ran, ACTB and PFN1. Interacts with ACTB. Interacts with VASP. Interacts with HTT. Interacts with SH3BGRL. Occurs in many kinds of cells as a complex with monomeric actin in a 1:1 ratio. Interacts with ACTMAP. Post-translationally, phosphorylation at Ser-138 reduces its affinity for G-actin and blocks its interaction with HTT, reducing its ability to inhibit androgen receptor (AR) and HTT aggregation.

The protein localises to the cytoplasm. Its subcellular location is the cytoskeleton. Functionally, binds to actin and affects the structure of the cytoskeleton. At high concentrations, profilin prevents the polymerization of actin, whereas it enhances it at low concentrations. By binding to PIP2, it inhibits the formation of IP3 and DG. Inhibits androgen receptor (AR) and HTT aggregation and binding of G-actin is essential for its inhibition of AR. This chain is Profilin-1 (PFN1), found in Bos taurus (Bovine).